A 156-amino-acid chain; its full sequence is Arginine repressor (156 aa).

The protein belongs to the ArgR family.

The protein localises to the cytoplasm. Its pathway is amino-acid biosynthesis; L-arginine biosynthesis [regulation]. Functionally, regulates arginine biosynthesis genes. This Aliivibrio fischeri (strain ATCC 700601 / ES114) (Vibrio fischeri) protein is Arginine repressor.